The primary structure comprises 808 residues: DNA replication licensing factor MCM3 (808 aa).

Position 2 is an N-acetylalanine (Ala-2). Ser-160 and Ser-275 each carry phosphoserine. Lys-293 bears the N6-acetyllysine mark. One can recognise an MCM domain in the interval Ile-295 to Leu-502. ADP contacts are provided by Gln-353, Leu-393, Glu-394, Ala-395, and Ala-397. The Arginine finger motif lies at Ser-477–Asp-480. An ATP-binding site is contributed by Ala-523. The residue at position 535 (Ser-535) is a Phosphoserine; by ATM. Position 547 is an N6-acetyllysine (Lys-547). Position 611 is a phosphoserine (Ser-611). The disordered stretch occupies residues Lys-662–Leu-739. An ATP-binding site is contributed by Arg-664. 3 positions are modified to phosphoserine: Ser-668, Ser-672, and Ser-681. Residues Glu-679–Lys-688 show a composition bias toward basic and acidic residues. A Phosphotyrosine modification is found at Tyr-708. 2 positions are modified to phosphothreonine: Thr-713 and Thr-722. The segment covering Asp-727–Leu-739 has biased composition (basic and acidic residues). 2 positions are modified to phosphoserine: Ser-728 and Ser-734.

Belongs to the MCM family. As to quaternary structure, component of the MCM2-7 complex. The complex forms a toroidal hexameric ring with the proposed subunit order MCM2-MCM6-MCM4-MCM7-MCM3-MCM5. Component of the CMG helicase complex, a hexameric ring of related MCM2-7 subunits stabilized by CDC45 and the tetrameric GINS complex. Associated with the replication-specific DNA polymerase alpha. Interacts with MCMBP. Interacts with ANKRD17. Interacts with MCM3AP isoform MCM3AP; this interaction leads to MCM3 acetylation. Acetylated by MCM3AP. Post-translationally, O-glycosylated (O-GlcNAcylated), in a cell cycle-dependent manner.

It localises to the nucleus. The protein resides in the chromosome. It carries out the reaction ATP + H2O = ADP + phosphate + H(+). In terms of biological role, acts as a component of the MCM2-7 complex (MCM complex) which is the replicative helicase essential for 'once per cell cycle' DNA replication initiation and elongation in eukaryotic cells. Core component of CDC45-MCM-GINS (CMG) helicase, the molecular machine that unwinds template DNA during replication, and around which the replisome is built. The active ATPase sites in the MCM2-7 ring are formed through the interaction surfaces of two neighboring subunits such that a critical structure of a conserved arginine finger motif is provided in trans relative to the ATP-binding site of the Walker A box of the adjacent subunit. The six ATPase active sites, however, are likely to contribute differentially to the complex helicase activity. Required for the entry in S phase and for cell division. The polypeptide is DNA replication licensing factor MCM3 (MCM3) (Bos taurus (Bovine)).